The following is a 204-amino-acid chain: Synaptosomal-associated protein 25-A (204 aa).

A compositionally biased stretch (basic and acidic residues) spans 1 to 11 (MAEDADMRNEL). The tract at residues 1 to 25 (MAEDADMRNELSDMQQRADQLADES) is disordered. T-SNARE coiled-coil homology domains are found at residues 19–81 (DQLA…LNDL) and 138–200 (DARE…ATKM).

It belongs to the SNAP-25 family.

Its subcellular location is the synapse. The protein localises to the synaptosome. The protein resides in the cell membrane. Its function is as follows. May play an important role in the synaptic function of specific neuronal systems. Associates with proteins involved in vesicle docking and membrane fusion. The protein is Synaptosomal-associated protein 25-A (snap25a) of Carassius auratus (Goldfish).